The primary structure comprises 511 residues: Ribose import ATP-binding protein RbsA (511 aa).

ABC transporter domains follow at residues 7-242 and 256-500; these read LQIS…VGRE and CSTT…SGTQ. An ATP-binding site is contributed by 39–46; the sequence is GENGAGKS.

It belongs to the ABC transporter superfamily. Ribose importer (TC 3.A.1.2.1) family. In terms of assembly, the complex is composed of an ATP-binding protein (RbsA), two transmembrane proteins (RbsC) and a solute-binding protein (RbsB).

The protein resides in the cell inner membrane. The catalysed reaction is D-ribose(out) + ATP + H2O = D-ribose(in) + ADP + phosphate + H(+). In terms of biological role, part of the ABC transporter complex RbsABC involved in ribose import. Responsible for energy coupling to the transport system. This Ruegeria sp. (strain TM1040) (Silicibacter sp.) protein is Ribose import ATP-binding protein RbsA.